A 132-amino-acid polypeptide reads, in one-letter code: Putative holo-[acyl-carrier-protein] synthase (132 aa).

Asp6 and Glu67 together coordinate Mg(2+).

This sequence belongs to the P-Pant transferase superfamily. AcpS family.

The enzyme catalyses apo-[ACP] + CoA = holo-[ACP] + adenosine 3',5'-bisphosphate + H(+). Its function is as follows. Transfers the 4'-phosphopantetheine moiety from coenzyme A to a Ser of acyl-carrier-protein. The sequence is that of Putative holo-[acyl-carrier-protein] synthase (new8) from Schizosaccharomyces pombe (strain 972 / ATCC 24843) (Fission yeast).